Consider the following 963-residue polypeptide: SH3 domain-binding protein 4 (963 aa).

One can recognise an SH3 1 domain in the interval 55 to 114 (GNAKEVIAIKDYCPTNFTTLKFSKGDHLYVLDTSGGEWWYAHNTTEMGYIPSSYVQPLNY). Phosphoserine occurs at positions 131, 246, 251, 279, and 296. Residues 317–454 (TNIVCKLDSS…LEPCMYVAVV (138 aa)) enclose the ZU5 domain. Ser637 carries the phosphoserine modification. Residues 654 to 724 (SSLKFGKLLK…HTKNVLVVGR (71 aa)) enclose the SH3 2 domain.

In terms of assembly, homodimer or homooligomer. Interacts with DNM2, EPS15, clathrin, the adapter protein complex 2/AP-2 and TFRC. Interacts with the Rag GTPases RRAGA, RRAGB, RRAGC and RRAGD; the interaction is most probably direct, preferentially occurs with their inactive GDP-bound form and is negatively regulated by amino acids. (Microbial infection) Interacts with molluscum contagiosum virus protein MC159L; this interaction is important for the suppression of autophagy. In terms of processing, phosphorylated upon EGF stimulation. Phosphorylation prevents interaction with DNM2. Expressed in all tissues tested with higher expression in pancreas. Expressed by retinal pigment epithelial cells (at protein level).

The protein localises to the membrane. The protein resides in the clathrin-coated pit. It is found in the cytoplasmic vesicle. It localises to the clathrin-coated vesicle. Its subcellular location is the nucleus. Functionally, may function in transferrin receptor internalization at the plasma membrane through a cargo-specific control of clathrin-mediated endocytosis. Alternatively, may act as a negative regulator of the amino acid-induced TOR signaling by inhibiting the formation of active Rag GTPase complexes. Preferentially binds inactive Rag GTPase complexes and prevents their interaction with the mTORC1 complex inhibiting its relocalization to lysosomes and its activation. Thereby, may indirectly regulate cell growth, proliferation and autophagy. The sequence is that of SH3 domain-binding protein 4 (SH3BP4) from Homo sapiens (Human).